A 178-amino-acid chain; its full sequence is Actin-related protein 2/3 complex subunit 3 (178 aa).

Residue Lys-29 forms a Glycyl lysine isopeptide (Lys-Gly) (interchain with G-Cter in ubiquitin) linkage.

The protein belongs to the ARPC3 family. Component of the Arp2/3 complex composed of ARP2, ARP3, ARC40/p41-ARC, ARC35/p34-ARC, ARC18/p21-ARC, ARC19/p20-ARC and ARC16/p16-ARC.

The protein localises to the cytoplasm. It is found in the cytoskeleton. Functionally, functions as a component of the Arp2/3 complex which is involved in regulation of actin polymerization and together with an activating nucleation-promoting factor (NPF) mediates the formation of branched actin networks. This Saccharomyces cerevisiae (strain ATCC 204508 / S288c) (Baker's yeast) protein is Actin-related protein 2/3 complex subunit 3 (ARC18).